Here is a 706-residue protein sequence, read N- to C-terminus: D-(-)-3-hydroxybutyrate oligomer hydrolase (706 aa).

An N-terminal signal peptide occupies residues 1–27 (MTIIIAGKNTLTLTSLAAAVLALGACG). Residue Ser-311 is the Charge relay system of the active site.

Belongs to the D-(-)-3-hydroxybutyrate oligomer hydrolase family.

Its subcellular location is the secreted. The enzyme catalyses (3R)-hydroxybutanoate dimer + H2O = 2 (R)-3-hydroxybutanoate + H(+). Its pathway is lipid metabolism; butanoate metabolism. In terms of biological role, participates in the degradation of poly-3-hydroxybutyrate (PHB). It works downstream of poly(3-hydroxybutyrate) depolymerase, hydrolyzing D(-)-3-hydroxybutyrate oligomers of various length (3HB-oligomers) into 3HB-monomers. The chain is D-(-)-3-hydroxybutyrate oligomer hydrolase from Polaromonas naphthalenivorans (strain CJ2).